Here is a 319-residue protein sequence, read N- to C-terminus: N-acetylneuraminate lyase (319 aa).

Positions 51 and 52 each coordinate aceneuramate. Residue Tyr-143 is the Proton donor of the active site. The Schiff-base intermediate with substrate role is filled by Lys-173. Positions 175, 199, 201, 202, and 218 each coordinate aceneuramate.

This sequence belongs to the DapA family. NanA subfamily. As to quaternary structure, homotetramer.

It is found in the cytoplasm. It carries out the reaction aceneuramate = aldehydo-N-acetyl-D-mannosamine + pyruvate. It participates in amino-sugar metabolism; N-acetylneuraminate degradation. Functionally, catalyzes the cleavage of N-acetylneuraminic acid (sialic acid) to form pyruvate and N-acetylmannosamine via a Schiff base intermediate. It prevents sialic acids from being recycled and returning to the cell surface. Involved in the N-glycolylneuraminic acid (Neu5Gc) degradation pathway. The protein is N-acetylneuraminate lyase of Sus scrofa (Pig).